The primary structure comprises 344 residues: Dihydroorotate dehydrogenase (quinone) (344 aa).

FMN is bound by residues 61–65 (AGLDK) and Thr-85. Lys-65 is a substrate binding site. 110 to 114 (NRMGF) is a binding site for substrate. Residues Asn-138 and Asn-171 each coordinate FMN. Residue Asn-171 participates in substrate binding. Residue Ser-174 is the Nucleophile of the active site. A substrate-binding site is contributed by Asn-176. Lys-216 and Thr-244 together coordinate FMN. Residue 245–246 (NT) participates in substrate binding. Residues Gly-267, Gly-296, and 317–318 (YS) contribute to the FMN site.

This sequence belongs to the dihydroorotate dehydrogenase family. Type 2 subfamily. In terms of assembly, monomer. The cofactor is FMN.

Its subcellular location is the cell membrane. The enzyme catalyses (S)-dihydroorotate + a quinone = orotate + a quinol. The protein operates within pyrimidine metabolism; UMP biosynthesis via de novo pathway; orotate from (S)-dihydroorotate (quinone route): step 1/1. Catalyzes the conversion of dihydroorotate to orotate with quinone as electron acceptor. This Psychrobacter cryohalolentis (strain ATCC BAA-1226 / DSM 17306 / VKM B-2378 / K5) protein is Dihydroorotate dehydrogenase (quinone).